Reading from the N-terminus, the 98-residue chain is Complement inhibitor RaCI1 (98 aa).

Positions 1-20 (MNAMLVLFIASALFISEHNT) are cleaved as a signal peptide. 3 disulfide bridges follow: C33–C57, C38–C59, and C53–C74. A disordered region spans residues 79-98 (TTKPPMAPGDNKDNKEEESN). Residues 88 to 98 (DNKDNKEEESN) show a composition bias toward basic and acidic residues.

It belongs to the RaCI family. As to expression, expressed in salivary glands.

It localises to the secreted. In terms of biological role, complement inhibitor. Prevents complement-mediated C5 activation by binding to C5. Binds C5 at a different binding site than the other tick complement inhibitors OmCI and CirpT1, and the drug eculizumab. Inhibits the complement in human and guinea pig but not in other species tested (rabbit, rat, mouse, and pig). The sequence is that of Complement inhibitor RaCI1 from Rhipicephalus appendiculatus (Brown ear tick).